We begin with the raw amino-acid sequence, 621 residues long: MALALVSVAPLVSMRRSLFSSPYELKSIDKTIPNLVMCRKRMLGRPSIRVSSTASVSNDDGVRRRVGDYRYNHWDEDLIDSLATSYEAPSYLKRADTLVEAIKDRFNSMGVDDGERMSPLTDLYQRLWMVDSVERLGIDRHFQNEIKSALDYVFSYWKEKGIGRGRQSAVTDLNSTALGLRTLRLHGYPVSSDVLENFKDHNGQFTCSGIQTEGEIRGVLNLFRASLIAFPGEKVMEEAEIFSTMYLKHALQKIAVSSLSQEIEYLLEYGWHTNPPRLEARMYMEVFPQDTIYEQKLVELAKVEFNIFHSLQKRELQSLTRWWKHYGFPQLSFTRHIHVEYYTFGSCIATDPKQSAFRLCFAKMSYFVTVLDDIYDTYGTMEELELFTAAIKRWDPSVVDCLPEYMKGVYMAVYDTVNEMAKEAEKVQGRDTLNYVRQAWELYIDAYMPEAKWISSGYLPTFQEYLDNSKISFGTRITILQPILTLGEPLPHEILQEIDFPAKFNDLISVILRLKGDTRCYKADRARGEEASSVSCYMKDNAGITEEDAIHCINDMVNNLLKELNWELLKPDSNVPISCRKAAFDICRIFHHGYKYRDGYGDATIEVKNLVKRTVLEPVPL.

The N-terminal 49 residues, 1-49 (MALALVSVAPLVSMRRSLFSSPYELKSIDKTIPNLVMCRKRMLGRPSIR), are a transit peptide targeting the chloroplast. Mg(2+)-binding residues include aspartate 372, aspartate 376, and aspartate 524. The DDXXD motif signature appears at 372-376 (DDIYD).

This sequence belongs to the terpene synthase family. Tpsd subfamily. The cofactor is Mg(2+). It depends on Mn(2+) as a cofactor.

The protein resides in the plastid. It localises to the chloroplast. It catalyses the reaction (2E)-geranyl diphosphate = (-)-beta-phellandrene + diphosphate. Its pathway is terpene metabolism; oleoresin biosynthesis. The protein operates within secondary metabolite biosynthesis; terpenoid biosynthesis. Functionally, monoterpene synthase (TPS) involved in the biosynthesis of monoterpene natural products included in conifer oleoresin secretions and volatile emissions; these compounds contribute to biotic and abiotic stress defense against herbivores and pathogens. Catalyzes the conversion of (2E)-geranyl diphosphate (GPP) to (-)-beta-phellandrene. This is (-)-beta-phellandrene synthase 1, chloroplastic from Pinus banksiana (Jack pine).